A 338-amino-acid polypeptide reads, in one-letter code: Phosphate acyltransferase (338 aa).

This sequence belongs to the PlsX family. In terms of assembly, homodimer. Probably interacts with PlsY.

It localises to the cytoplasm. It carries out the reaction a fatty acyl-[ACP] + phosphate = an acyl phosphate + holo-[ACP]. It participates in lipid metabolism; phospholipid metabolism. Functionally, catalyzes the reversible formation of acyl-phosphate (acyl-PO(4)) from acyl-[acyl-carrier-protein] (acyl-ACP). This enzyme utilizes acyl-ACP as fatty acyl donor, but not acyl-CoA. This chain is Phosphate acyltransferase, found in Mannheimia succiniciproducens (strain KCTC 0769BP / MBEL55E).